A 624-amino-acid chain; its full sequence is MALVSVAPLVSMRRSLFSSPYELKSIDKTIPNLVMCRKRMLGRPSIRVSSTASVSNDDGVRRRVGDYRYNHWDEDLIDSLATSYEAPSYLKRADTLVEAIKDRFNSMGVDDGERMSPLTDLYQRLWMVDSVERLGIDRHFQNEIKSALDYVFRYFASSYWKEKGIGRGRQSAVTDLNSTALGLRTLRLHGYPVSSDVLENFKDHNGQFTCSGIQTEGEIRGVLNLFRASLIAFPGEKVMEEAEIFSTMYLKHALQKIAVSSLSQEIEYLLEYGWHTNPPRLEARMYMEVFPQDTIYEQKLVELAKVEFNIFHSLQKRELQSLTRWWKHYGFPQLSFTRHIHVEYYTFGSCIATDPKQSAFRLCFAKMSYFVTVLDDIYDTYGTMEELELFTAAIKRWDPSVVDCLPEYMKGVYMAVYDTVNEMAKEAEKVQGRDTLNYVRQAWELYIDAYMPEAKWISSGYLPTFQEYLDNSKISFGTRITILQPILTLGEPLPHEILQEIDFPAKFNDLISVILRLKGDTRCYKADRARGEEASSVSCYMKDNAGLTEEDAIHRINAMVHNLLKELNWELLKPDCNVPISCKKAAFDICRIFHHGYKYRDGYGDATIETKNLVKRTVLEPVPL.

Residues 1–47 (MALVSVAPLVSMRRSLFSSPYELKSIDKTIPNLVMCRKRMLGRPSIR) constitute a chloroplast transit peptide. Residues aspartate 375, aspartate 379, and aspartate 527 each contribute to the Mg(2+) site. Residues 375–379 (DDIYD) carry the DDXXD motif motif.

This sequence belongs to the terpene synthase family. Tpsd subfamily. It depends on Mg(2+) as a cofactor. The cofactor is Mn(2+).

It localises to the plastid. The protein localises to the chloroplast. It carries out the reaction (2E)-geranyl diphosphate = (-)-beta-phellandrene + diphosphate. It functions in the pathway terpene metabolism; oleoresin biosynthesis. The protein operates within secondary metabolite biosynthesis; terpenoid biosynthesis. In terms of biological role, monoterpene synthase (TPS) involved in the biosynthesis of monoterpene natural products included in conifer oleoresin secretions and volatile emissions; these compounds contribute to biotic and abiotic stress defense against herbivores and pathogens. Catalyzes the conversion of (2E)-geranyl diphosphate (GPP) to (-)-beta-phellandrene. The sequence is that of (-)-beta-phellandrene synthase 2, chloroplastic from Pinus contorta (Shore pine).